Here is a 571-residue protein sequence, read N- to C-terminus: Urease subunit alpha (571 aa).

In terms of domain architecture, Urease spans 134–571 (GAIDTHIHFI…LPMAQRYFLF (438 aa)). Residues His-139, His-141, and Lys-222 each coordinate Ni(2+). Lys-222 carries the post-translational modification N6-carboxylysine. His-224 contributes to the substrate binding site. The Ni(2+) site is built by His-251 and His-277. His-325 (proton donor) is an active-site residue. Asp-365 serves as a coordination point for Ni(2+).

It belongs to the metallo-dependent hydrolases superfamily. Urease alpha subunit family. As to quaternary structure, heterotrimer of UreA (gamma), UreB (beta) and UreC (alpha) subunits. Three heterotrimers associate to form the active enzyme. Requires Ni cation as cofactor. Post-translationally, carboxylation allows a single lysine to coordinate two nickel ions.

The protein localises to the cytoplasm. It carries out the reaction urea + 2 H2O + H(+) = hydrogencarbonate + 2 NH4(+). It functions in the pathway nitrogen metabolism; urea degradation; CO(2) and NH(3) from urea (urease route): step 1/1. This is Urease subunit alpha from Bordetella bronchiseptica (strain ATCC BAA-588 / NCTC 13252 / RB50) (Alcaligenes bronchisepticus).